Here is a 30-residue protein sequence, read N- to C-terminus: Small toxic protein BsrE (30 aa).

A helical membrane pass occupies residues 4 to 24; it reads FQALMLMLAIGSFIIALLTYI.

The protein resides in the cell membrane. Functionally, toxic component of a type I toxin-antitoxin (TA) system; overexpression in the absence of cognate antisense antitoxin SR5 RNA leads to cell lysis. Base pairing occurs between the 3' UTRs of bsrE mRNA and SR5 RNA which leads to bsrE mRNA degradation initiated by RNase III (rnc) and RNase J1 (rnjA). Genetic evidence suggests an unidentified RNA-binding protein may exist that promotes TA RNA interaction. This chain is Small toxic protein BsrE, found in Bacillus subtilis (strain 168).